The primary structure comprises 418 residues: Sonic hedgehog protein (418 aa).

Residues 1-23 form the signal peptide; the sequence is MRLLTRVLLVSLLTLSLVVSGLA. Cys24 carries N-palmitoyl cysteine lipidation. Residues 32–38 carry the Cardin-Weintraub motif; sequence RRRHPKK. Residues Glu89, Glu90, Asp95, Thr125, Glu126, Asp129, and Asp131 each contribute to the Ca(2+) site. 3 residues coordinate Zn(2+): His140, Asp147, and His182. Gly197 carries Cholesterol glycine ester lipidation.

The protein belongs to the hedgehog family. As to quaternary structure, interacts with HHATL/GUP1 which negatively regulates HHAT-mediated palmitoylation of the SHH N-terminus. Interacts with BOC and CDON. Interacts with HHIP. Interacts with DISP1 via its cholesterol anchor. Interacts with SCUBE2. In terms of assembly, multimer. The C-terminal domain displays an autoproteolysis activity and a cholesterol transferase activity. Both activities result in the cleavage of the full-length protein and covalent attachment of a cholesterol moiety to the C-terminal of the newly generated N-terminal fragment (ShhN). Cholesterylation is required for the sonic hedgehog protein N-product targeting to lipid rafts and multimerization. ShhN is the active species in both local and long-range signaling, whereas the C-product (ShhC) is degraded in the reticulum endoplasmic. Post-translationally, N-palmitoylation by HHAT of ShhN is required for sonic hedgehog protein N-product multimerization and full activity. It is a prerequisite for the membrane-proximal positioning and the subsequent shedding of this N-terminal peptide. In terms of processing, the lipidated N- and C-terminal peptides of ShhNp can be cleaved (shedding). The N-terminal palmitoylated peptide is cleaved at the Cardin-Weintraub (CW) motif site. The cleavage reduced the interactions with heparan sulfate. The cleavage is enhanced by SCUBE2. As to expression, expressed in the ventral midline of the neural tube and brain. Also found in the notochord and in developing fin bud. In the developing brain, expression occurs in domains that include a discrete region in the floor of the diencephalon.

Its subcellular location is the endoplasmic reticulum membrane. It is found in the golgi apparatus membrane. The protein localises to the cell membrane. The catalysed reaction is glycyl-L-cysteinyl-[protein] + cholesterol + H(+) = [protein]-C-terminal glycyl cholesterol ester + N-terminal L-cysteinyl-[protein]. Its function is as follows. The C-terminal part of the sonic hedgehog protein precursor displays an autoproteolysis and a cholesterol transferase activity. Both activities result in the cleavage of the full-length protein into two parts (ShhN and ShhC) followed by the covalent attachment of a cholesterol moiety to the C-terminal of the newly generated ShhN. Both activities occur in the endoplasmic reticulum. Once cleaved, ShhC is degraded in the endoplasmic reticulum. In terms of biological role, the dually lipidated sonic hedgehog protein N-product (ShhNp) is a morphogen which is essential for a variety of patterning events during development. Involved in dorso-ventral patterning of the brain and in early patterning of the developing eyes. Binds to the patched (PTCH1) receptor, which functions in association with smoothened (SMO), to activate the transcription of target genes. In the absence of SHH, PTCH1 represses the constitutive signaling activity of SMO. This Danio rerio (Zebrafish) protein is Sonic hedgehog protein (shha).